Reading from the N-terminus, the 668-residue chain is Acyl-CoA-binding domain-containing protein 4 (668 aa).

Positions 12–106 (YPERFYAAAS…LEEDDPGWYS (95 aa)) constitute an ACB domain. Residues K33, 48–52 (YALYQ), and K74 each bind an acyl-CoA. 6 Kelch repeats span residues 195-242 (KMYI…TLLA), 255-305 (KLLS…MVGK), 307-356 (LVIF…VHAE), 358-407 (FLLI…TIGE), 408-456 (NWFI…LVVS), and 463-508 (VLVA…VNNA). S515 and S520 each carry phosphoserine. Residues 538–647 (KVEGNSERII…EQAAMNAKRQ (110 aa)) adopt a coiled-coil conformation. A disordered region spans residues 639–668 (QAAMNAKRQGSGGVWGWLAGSPQEKDDDSP).

This sequence belongs to the ACBP family. Interacts with RAP2-3/EBP, an ethylene-responsive element binding protein. Mostly expressed in roots, stems, and leaves, and, to a lower extent, in flowers and siliques.

The protein resides in the cytoplasm. Its function is as follows. Binds medium- and long-chain acyl-CoA esters with very high affinity. Can interact in vitro with oleoyl-CoA, barely with palmitoyl-CoA, but not with arachidonyl-CoA. May function as an intracellular carrier of acyl-CoA esters. Plays a role in the biosynthesis of membrane lipids including galactolipids and phospholipids. The chain is Acyl-CoA-binding domain-containing protein 4 (ACBP4) from Arabidopsis thaliana (Mouse-ear cress).